The chain runs to 253 residues: 5'-nucleotidase SurE (253 aa).

A divalent metal cation contacts are provided by aspartate 8, aspartate 9, serine 39, and asparagine 95.

The protein belongs to the SurE nucleotidase family. A divalent metal cation is required as a cofactor.

It localises to the cytoplasm. It carries out the reaction a ribonucleoside 5'-phosphate + H2O = a ribonucleoside + phosphate. Its function is as follows. Nucleotidase that shows phosphatase activity on nucleoside 5'-monophosphates. In Kosmotoga olearia (strain ATCC BAA-1733 / DSM 21960 / TBF 19.5.1), this protein is 5'-nucleotidase SurE.